A 336-amino-acid polypeptide reads, in one-letter code: Holliday junction branch migration complex subunit RuvB (336 aa).

Residues 4–184 (ADRLISAGTT…FGIVQRLEFY (181 aa)) form a large ATPase domain (RuvB-L) region. ATP-binding positions include Ile23, Arg24, Gly65, Lys68, Thr69, Thr70, 131 to 133 (EDY), Arg174, Tyr184, and Arg221. Residue Thr69 participates in Mg(2+) binding. Residues 185–255 (QVPDLQYIVS…IAAQALDMLN (71 aa)) are small ATPAse domain (RuvB-S). The interval 258–336 (AEGFDYMDRK…HFGITPPEMP (79 aa)) is head domain (RuvB-H). DNA contacts are provided by Arg294, Arg313, and Arg318.

Belongs to the RuvB family. As to quaternary structure, homohexamer. Forms an RuvA(8)-RuvB(12)-Holliday junction (HJ) complex. HJ DNA is sandwiched between 2 RuvA tetramers; dsDNA enters through RuvA and exits via RuvB. An RuvB hexamer assembles on each DNA strand where it exits the tetramer. Each RuvB hexamer is contacted by two RuvA subunits (via domain III) on 2 adjacent RuvB subunits; this complex drives branch migration. In the full resolvosome a probable DNA-RuvA(4)-RuvB(12)-RuvC(2) complex forms which resolves the HJ.

It is found in the cytoplasm. It catalyses the reaction ATP + H2O = ADP + phosphate + H(+). In terms of biological role, the RuvA-RuvB-RuvC complex processes Holliday junction (HJ) DNA during genetic recombination and DNA repair, while the RuvA-RuvB complex plays an important role in the rescue of blocked DNA replication forks via replication fork reversal (RFR). RuvA specifically binds to HJ cruciform DNA, conferring on it an open structure. The RuvB hexamer acts as an ATP-dependent pump, pulling dsDNA into and through the RuvAB complex. RuvB forms 2 homohexamers on either side of HJ DNA bound by 1 or 2 RuvA tetramers; 4 subunits per hexamer contact DNA at a time. Coordinated motions by a converter formed by DNA-disengaged RuvB subunits stimulates ATP hydrolysis and nucleotide exchange. Immobilization of the converter enables RuvB to convert the ATP-contained energy into a lever motion, pulling 2 nucleotides of DNA out of the RuvA tetramer per ATP hydrolyzed, thus driving DNA branch migration. The RuvB motors rotate together with the DNA substrate, which together with the progressing nucleotide cycle form the mechanistic basis for DNA recombination by continuous HJ branch migration. Branch migration allows RuvC to scan DNA until it finds its consensus sequence, where it cleaves and resolves cruciform DNA. This chain is Holliday junction branch migration complex subunit RuvB, found in Shigella sonnei (strain Ss046).